We begin with the raw amino-acid sequence, 253 residues long: Snake venom serine protease homolog HS120 (253 aa).

Residues 1–18 form the signal peptide; sequence MVLIRVIANLLILQLSYA. Positions 19–24 are excised as a propeptide; sequence QKSSEL. The region spanning 25-244 is the Peptidase S1 domain; sequence VIGGDECNIN…YLPWIQSIIA (220 aa). 6 disulfide bridges follow: Cys-31–Cys-158, Cys-49–Cys-65, Cys-98–Cys-251, Cys-137–Cys-205, Cys-169–Cys-184, and Cys-195–Cys-220. Asn-116 and Asn-165 each carry an N-linked (GlcNAc...) asparagine glycan.

The protein belongs to the peptidase S1 family. Snake venom subfamily. Expressed by the venom gland.

Its subcellular location is the secreted. Functionally, snake venom serine protease homolog that may act in the hemostasis system of the prey. The protein is Snake venom serine protease homolog HS120 of Bothrops jararaca (Jararaca).